Consider the following 795-residue polypeptide: Serine/threonine-protein kinase MARK1 (795 aa).

The interval methionine 1–proline 41 is disordered. Threonine 5 is modified (phosphothreonine). The region spanning tyrosine 60–methionine 311 is the Protein kinase domain. ATP-binding positions include isoleucine 66–valine 74 and lysine 89. Aspartate 182 (proton acceptor) is an active-site residue. Threonine 208 is subject to Phosphothreonine. At threonine 215 the chain carries Phosphothreonine; by LKB1 and TAOK1. Residue serine 219 is modified to Phosphoserine; by GSK3-beta. Residues aspartate 329 to arginine 370 form the UBA domain. Disordered stretches follow at residues glycine 377 to serine 498 and glutamine 518 to serine 699. A phosphoserine mark is found at serine 382, serine 390, serine 393, serine 403, serine 423, and serine 444. Residues cysteine 387–serine 403 show a composition bias toward polar residues. Over residues serine 447 to arginine 459 the composition is skewed to basic and acidic residues. Polar residues predominate over residues glycine 462 to threonine 473. Serine 475 carries the post-translational modification Phosphoserine. The span at threonine 486–serine 495 shows a compositional bias: polar residues. Low complexity-rich tracts occupy residues serine 523–alanine 547 and proline 585–proline 599. Position 588 is a phosphoserine (serine 588). Threonine 613 bears the Phosphothreonine; by PKC/PRKCZ mark. The segment covering glycine 647–threonine 657 has biased composition (polar residues). Basic and acidic residues-rich tracts occupy residues valine 661–threonine 676 and aspartate 683–proline 697. Serine 666 carries the post-translational modification Phosphoserine. The KA1 domain occupies aspartate 746–leucine 795.

The protein belongs to the protein kinase superfamily. CAMK Ser/Thr protein kinase family. SNF1 subfamily. As to quaternary structure, interacts with MAPT/TAU. Mg(2+) serves as cofactor. Phosphorylated at Thr-215 by STK11/LKB1 in complex with STE20-related adapter-alpha (STRADA) pseudo kinase and CAB39. Phosphorylation at Thr-215 by TAOK1 activates the kinase activity, leading to phosphorylation and detachment of MAPT/TAU from microtubules. Phosphorylation at Ser-219 by GSK3-beta (GSK3B) inhibits the kinase activity. Phosphorylation at Thr-613 by PRKCZ/aPKC in polarized epithelial cells inhibits the kinase activity.

The protein localises to the cell membrane. It localises to the cytoplasm. The protein resides in the cytoskeleton. It is found in the cell projection. Its subcellular location is the dendrite. The catalysed reaction is L-seryl-[protein] + ATP = O-phospho-L-seryl-[protein] + ADP + H(+). The enzyme catalyses L-threonyl-[protein] + ATP = O-phospho-L-threonyl-[protein] + ADP + H(+). It carries out the reaction L-seryl-[tau protein] + ATP = O-phospho-L-seryl-[tau protein] + ADP + H(+). It catalyses the reaction L-threonyl-[tau protein] + ATP = O-phospho-L-threonyl-[tau protein] + ADP + H(+). Inhibited by phosphorylation at Ser-219. Activated by phosphorylation on Thr-215. Its function is as follows. Serine/threonine-protein kinase. Involved in cell polarity and microtubule dynamics regulation. Phosphorylates DCX, MAP2 and MAP4. Phosphorylates the microtubule-associated protein MAPT/TAU. Involved in cell polarity by phosphorylating the microtubule-associated proteins MAP2, MAP4 and MAPT/TAU at KXGS motifs, causing detachment from microtubules, and their disassembly. Involved in the regulation of neuronal migration through its dual activities in regulating cellular polarity and microtubule dynamics, possibly by phosphorylating and regulating DCX. Also acts as a positive regulator of the Wnt signaling pathway, probably by mediating phosphorylation of dishevelled proteins (DVL1, DVL2 and/or DVL3). The protein is Serine/threonine-protein kinase MARK1 of Mus musculus (Mouse).